Here is a 29-residue protein sequence, read N- to C-terminus: Kalata-B15 (29 aa).

The segment at residues 1–29 is a cross-link (cyclopeptide (Gly-Asp)); sequence GLPVCGESCFGGSCYTPGCSCTWPICTRD. 3 disulfides stabilise this stretch: Cys-5–Cys-19, Cys-9–Cys-21, and Cys-14–Cys-26.

In terms of processing, this is a cyclic peptide.

In terms of biological role, probably participates in a plant defense mechanism. This chain is Kalata-B15, found in Oldenlandia affinis.